The chain runs to 323 residues: Lipoyl synthase (323 aa).

C53, C58, C64, C79, C83, C86, and S293 together coordinate [4Fe-4S] cluster. The Radical SAM core domain occupies 65-282; the sequence is WTKKQATVMI…AATARAKGFS (218 aa).

Belongs to the radical SAM superfamily. Lipoyl synthase family. Requires [4Fe-4S] cluster as cofactor.

The protein resides in the cytoplasm. It catalyses the reaction [[Fe-S] cluster scaffold protein carrying a second [4Fe-4S](2+) cluster] + N(6)-octanoyl-L-lysyl-[protein] + 2 oxidized [2Fe-2S]-[ferredoxin] + 2 S-adenosyl-L-methionine + 4 H(+) = [[Fe-S] cluster scaffold protein] + N(6)-[(R)-dihydrolipoyl]-L-lysyl-[protein] + 4 Fe(3+) + 2 hydrogen sulfide + 2 5'-deoxyadenosine + 2 L-methionine + 2 reduced [2Fe-2S]-[ferredoxin]. It participates in protein modification; protein lipoylation via endogenous pathway; protein N(6)-(lipoyl)lysine from octanoyl-[acyl-carrier-protein]: step 2/2. In terms of biological role, catalyzes the radical-mediated insertion of two sulfur atoms into the C-6 and C-8 positions of the octanoyl moiety bound to the lipoyl domains of lipoate-dependent enzymes, thereby converting the octanoylated domains into lipoylated derivatives. The chain is Lipoyl synthase from Zymomonas mobilis subsp. mobilis (strain ATCC 31821 / ZM4 / CP4).